The sequence spans 345 residues: UDP-3-O-acylglucosamine N-acyltransferase (345 aa).

Residue H237 is the Proton acceptor of the active site.

This sequence belongs to the transferase hexapeptide repeat family. LpxD subfamily. Homotrimer.

It carries out the reaction a UDP-3-O-[(3R)-3-hydroxyacyl]-alpha-D-glucosamine + a (3R)-hydroxyacyl-[ACP] = a UDP-2-N,3-O-bis[(3R)-3-hydroxyacyl]-alpha-D-glucosamine + holo-[ACP] + H(+). It functions in the pathway bacterial outer membrane biogenesis; LPS lipid A biosynthesis. In terms of biological role, catalyzes the N-acylation of UDP-3-O-acylglucosamine using 3-hydroxyacyl-ACP as the acyl donor. Is involved in the biosynthesis of lipid A, a phosphorylated glycolipid that anchors the lipopolysaccharide to the outer membrane of the cell. This Geobacter sp. (strain M21) protein is UDP-3-O-acylglucosamine N-acyltransferase.